We begin with the raw amino-acid sequence, 486 residues long: D-mannonate oxidoreductase (486 aa).

25-36 contributes to the NAD(+) binding site; it reads IVHLGCGAFHRA.

This sequence belongs to the mannitol dehydrogenase family. UxuB subfamily.

The enzyme catalyses D-mannonate + NAD(+) = keto-D-fructuronate + NADH + H(+). It participates in carbohydrate metabolism; pentose and glucuronate interconversion. The protein is D-mannonate oxidoreductase (uxuB) of Escherichia coli (strain K12).